The following is a 194-amino-acid chain: tRNA(Phe) 7-((3-amino-3-carboxypropyl)-4-demethylwyosine(37)-N(4))-methyltransferase 1 (194 aa).

Belongs to the TYW3 family.

The enzyme catalyses 4-demethyl-7-[(3S)-3-amino-3-carboxypropyl]wyosine(37) in tRNA(Phe) + S-adenosyl-L-methionine = 7-[(3S)-3-amino-3-carboxypropyl]wyosine(37) in tRNA(Phe) + S-adenosyl-L-homocysteine + H(+). S-adenosyl-L-methionine-dependent methyltransferase that acts as a component of the wyosine derivatives biosynthesis pathway. Probably methylates N-4 position of wybutosine-86 to produce wybutosine-72. This is tRNA(Phe) 7-((3-amino-3-carboxypropyl)-4-demethylwyosine(37)-N(4))-methyltransferase 1 from Pyrococcus abyssi (strain GE5 / Orsay).